The primary structure comprises 63 residues: Male-specific sperm protein Mst84Da (63 aa).

Belongs to the MST(3)CGP family. As to expression, testis.

The polypeptide is Male-specific sperm protein Mst84Da (Mst84Da) (Drosophila melanogaster (Fruit fly)).